A 223-amino-acid chain; its full sequence is DNA mismatch repair protein MutH (223 aa).

It belongs to the MutH family.

It localises to the cytoplasm. In terms of biological role, sequence-specific endonuclease that cleaves unmethylated GATC sequences. It is involved in DNA mismatch repair. This is DNA mismatch repair protein MutH from Haemophilus influenzae (strain PittEE).